We begin with the raw amino-acid sequence, 147 residues long: 6,7-dimethyl-8-ribityllumazine synthase (147 aa).

5-amino-6-(D-ribitylamino)uracil contacts are provided by residues Phe-16, 48-50 (TFD), and 73-75 (AVI). 78 to 79 (DT) contacts (2S)-2-hydroxy-3-oxobutyl phosphate. Residue His-81 is the Proton donor of the active site. Leu-106 serves as a coordination point for 5-amino-6-(D-ribitylamino)uracil. Arg-121 contacts (2S)-2-hydroxy-3-oxobutyl phosphate.

It belongs to the DMRL synthase family.

The catalysed reaction is (2S)-2-hydroxy-3-oxobutyl phosphate + 5-amino-6-(D-ribitylamino)uracil = 6,7-dimethyl-8-(1-D-ribityl)lumazine + phosphate + 2 H2O + H(+). The protein operates within cofactor biosynthesis; riboflavin biosynthesis; riboflavin from 2-hydroxy-3-oxobutyl phosphate and 5-amino-6-(D-ribitylamino)uracil: step 1/2. Catalyzes the formation of 6,7-dimethyl-8-ribityllumazine by condensation of 5-amino-6-(D-ribitylamino)uracil with 3,4-dihydroxy-2-butanone 4-phosphate. This is the penultimate step in the biosynthesis of riboflavin. In Aeropyrum pernix (strain ATCC 700893 / DSM 11879 / JCM 9820 / NBRC 100138 / K1), this protein is 6,7-dimethyl-8-ribityllumazine synthase.